Reading from the N-terminus, the 942-residue chain is Protein inturned (942 aa).

Residues 1-52 (MASVASCDSRPSSDELPGDPSSQEEDEDYDFEDRVSDSGSYSSASSDYDDLE) form a disordered region. Acidic residues predominate over residues 22–31 (SQEEDEDYDF). Positions 37-46 (DSGSYSSASS) are enriched in low complexity. One can recognise a PDZ domain in the interval 185–263 (LVGIIHQTKW…PMQVKLTFEN (79 aa)). Serine 670 and serine 674 each carry phosphoserine. The segment at 704–754 (TRKPSPSCSSGGSDNGCEGGEDDGFSPHTTPDAVRKQRESQGSDGLEESGT) is disordered.

This sequence belongs to the inturned family. In terms of assembly, component of the CPLANE (ciliogenesis and planar polarity effectors) complex, composed of INTU, FUZ and WDPCP. Interacts with CPLANE1. Interacts with NPHP4 and DAAM1; INTU is mediating the interaction between NPHP4 and DAAM1.

The protein resides in the cytoplasm. It is found in the cell surface. Its subcellular location is the cytoskeleton. It localises to the cilium basal body. The protein localises to the microtubule organizing center. The protein resides in the centrosome. It is found in the centriole. In terms of biological role, plays a key role in ciliogenesis and embryonic development. Regulator of cilia formation by controlling the organization of the apical actin cytoskeleton and the positioning of the basal bodies at the apical cell surface, which in turn is essential for the normal orientation of elongating ciliary microtubules. Plays a key role in definition of cell polarity via its role in ciliogenesis but not via conversion extension. Has an indirect effect on hedgehog signaling. Proposed to function as core component of the CPLANE (ciliogenesis and planar polarity effectors) complex involved in the recruitment of peripheral IFT-A proteins to basal bodies. Required for recruitment of CPLANE2 to the mother centriole. Binds phosphatidylinositol 3-phosphate with highest affinity, followed by phosphatidylinositol 4-phosphate and phosphatidylinositol 5-phosphate. This Homo sapiens (Human) protein is Protein inturned (INTU).